Consider the following 103-residue polypeptide: MIPGEYHVASEPIDYNGGYEAISLEVKNVGDRAAQVGSHYHFYEANEAGLQFDREKARGKRLDIPAGTAIRFEPGETKTVQLIDFGGKRRIFGFNNKVNGFLD.

This sequence belongs to the urease beta subunit family. In terms of assembly, heterotrimer of UreA (gamma), UreB (beta) and UreC (alpha) subunits. Three heterotrimers associate to form the active enzyme.

It localises to the cytoplasm. The catalysed reaction is urea + 2 H2O + H(+) = hydrogencarbonate + 2 NH4(+). The protein operates within nitrogen metabolism; urea degradation; CO(2) and NH(3) from urea (urease route): step 1/1. Functionally, ureolysis may allow urea to be employed as a nitrogen source for growth and produces ammonia which may protect from killing at low pH. The polypeptide is Urease subunit beta (Streptococcus salivarius (strain 57.I)).